Reading from the N-terminus, the 210-residue chain is Endo-1,4-beta-xylanase A (210 aa).

Positions 1-19 are cleaved as a signal peptide; the sequence is MKLKKKMLTLLLTASMSFG. The region spanning 20 to 210 is the GH11 domain; that stretch reads LFGATSSAAT…SSGRSNVTVW (191 aa). Glu-104 (nucleophile) is an active-site residue. Glu-197 functions as the Proton donor in the catalytic mechanism.

The protein belongs to the glycosyl hydrolase 11 (cellulase G) family.

It carries out the reaction Endohydrolysis of (1-&gt;4)-beta-D-xylosidic linkages in xylans.. The protein operates within glycan degradation; xylan degradation. The protein is Endo-1,4-beta-xylanase A (xynA) of Geobacillus stearothermophilus (Bacillus stearothermophilus).